We begin with the raw amino-acid sequence, 112 residues long: Protein BEX5 (112 aa).

Basic and acidic residues-rich tracts occupy residues 1-12 (MEKDPKERREEE) and 30-51 (PKPR…REDM). Positions 1–56 (MEKDPKERREEEQAPVQNEEACPMGGGEGPKPRENVRGDWDPPAQDFREDMPNGLV) are disordered. Residues 101 to 105 (HHDHH) form a his cluster region. A Zn(2+)-binding site is contributed by cysteine 109.

It belongs to the BEX family. In terms of processing, ubiquitinated. Degraded by the proteasome.

Its subcellular location is the cytoplasm. The protein is Protein BEX5 (BEX5) of Bos taurus (Bovine).